A 316-amino-acid chain; its full sequence is Type II restriction enzyme BsuBI (316 aa).

This sequence belongs to the BsuBI/PstI type II restriction endonuclease family. In terms of assembly, homodimer. Requires Mg(2+) as cofactor.

It catalyses the reaction Endonucleolytic cleavage of DNA to give specific double-stranded fragments with terminal 5'-phosphates.. A P subtype restriction enzyme that recognizes the double-stranded sequence 5'-CTGCAG-3' and cleaves after A-5. The sequence is that of Type II restriction enzyme BsuBI (hsdBR) from Bacillus subtilis.